The following is a 338-amino-acid chain: Aspartate carbamoyltransferase catalytic subunit (338 aa).

Arg-57 and Thr-58 together coordinate carbamoyl phosphate. Lys-86 serves as a coordination point for L-aspartate. Positions 107, 135, and 138 each coordinate carbamoyl phosphate. L-aspartate is bound by residues Arg-172 and Arg-234. Carbamoyl phosphate-binding residues include Leu-274 and Pro-275.

This sequence belongs to the aspartate/ornithine carbamoyltransferase superfamily. ATCase family. Heterododecamer (2C3:3R2) of six catalytic PyrB chains organized as two trimers (C3), and six regulatory PyrI chains organized as three dimers (R2).

The enzyme catalyses carbamoyl phosphate + L-aspartate = N-carbamoyl-L-aspartate + phosphate + H(+). The protein operates within pyrimidine metabolism; UMP biosynthesis via de novo pathway; (S)-dihydroorotate from bicarbonate: step 2/3. In terms of biological role, catalyzes the condensation of carbamoyl phosphate and aspartate to form carbamoyl aspartate and inorganic phosphate, the committed step in the de novo pyrimidine nucleotide biosynthesis pathway. The protein is Aspartate carbamoyltransferase catalytic subunit of Cellvibrio japonicus (strain Ueda107) (Pseudomonas fluorescens subsp. cellulosa).